We begin with the raw amino-acid sequence, 73 residues long: Omega-conotoxin GVIA (73 aa).

The first 22 residues, 1 to 22 (MKLTCVVIVAVLLLTACQLITA), serve as a signal peptide directing secretion. A propeptide spanning residues 23–45 (DDSRGTQKHRALGSTTELSLSTR) is cleaved from the precursor. Intrachain disulfides connect cysteine 46–cysteine 61, cysteine 53–cysteine 64, and cysteine 60–cysteine 71. 4-hydroxyproline is present on residues proline 49, proline 55, and proline 66. The residue at position 72 (tyrosine 72) is a Tyrosine amide; in form omega-conotoxin GVIA.

This sequence belongs to the conotoxin O1 superfamily. Expressed by the venom duct.

It is found in the secreted. Omega-conotoxins act at presynaptic membranes, they bind and block voltage-gated calcium channels (Cav). This toxin blocks N-type calcium channels (Cav2.2/CACNA1B) with a high potency (it displaces [125I]GVIA with an IC(50)=3.7-38 pM). The sequence is that of Omega-conotoxin GVIA from Conus geographus (Geography cone).